The primary structure comprises 197 residues: Guanylate kinase (197 aa).

One can recognise a Guanylate kinase-like domain in the interval 10–187 (GSLFIVSAPA…AYQVLRSILI (178 aa)). 17–24 (APAGTGKT) contributes to the ATP binding site.

Belongs to the guanylate kinase family.

It is found in the cytoplasm. It catalyses the reaction GMP + ATP = GDP + ADP. Functionally, essential for recycling GMP and indirectly, cGMP. The sequence is that of Guanylate kinase from Protochlamydia amoebophila (strain UWE25).